The following is a 33-amino-acid chain: Cytochrome b6-f complex subunit 8 (33 aa).

Residues leucine 2–valine 22 traverse the membrane as a helical segment.

It belongs to the PetN family. In terms of assembly, the 4 large subunits of the cytochrome b6-f complex are cytochrome b6, subunit IV (17 kDa polypeptide, PetD), cytochrome f and the Rieske protein, while the 4 small subunits are PetG, PetL, PetM and PetN. The complex functions as a dimer.

It localises to the cellular thylakoid membrane. Component of the cytochrome b6-f complex, which mediates electron transfer between photosystem II (PSII) and photosystem I (PSI), cyclic electron flow around PSI, and state transitions. In Prochlorococcus marinus (strain MIT 9303), this protein is Cytochrome b6-f complex subunit 8.